Here is a 207-residue protein sequence, read N- to C-terminus: GTP-binding protein Rheb homolog 1 (207 aa).

8 residues coordinate GTP: Gly25, Lys26, Ser27, Tyr42, Thr45, Asn126, Asp129, and Ala157. Ser27 contacts Mg(2+). Positions 42–50 (YESTIEDQH) match the Effector region motif. Thr45 lines the Mg(2+) pocket. Positions 180–193 (NLSPTERPNGNSPK) are enriched in polar residues. The tract at residues 180 to 207 (NLSPTERPNGNSPKRNPFKDDGKPCSIS) is disordered. Basic and acidic residues predominate over residues 196–207 (PFKDDGKPCSIS). Residue Cys204 is modified to Cysteine methyl ester. Cys204 is lipidated: S-farnesyl cysteine. The propeptide at 205–207 (SIS) is removed in mature form.

The protein belongs to the small GTPase superfamily. Rheb family.

The protein localises to the cell membrane. It catalyses the reaction GTP + H2O = GDP + phosphate + H(+). Its function is as follows. Binds GTP and exhibits intrinsic GTPase activity. This chain is GTP-binding protein Rheb homolog 1 (rheb-1), found in Caenorhabditis elegans.